Consider the following 54-residue polypeptide: Apelin receptor early endogenous ligand (54 aa).

Positions 1–25 (MRFQPLFWVFFIFAMSLLFITEEKS) are cleaved as a signal peptide.

The protein belongs to the Elabela/Toddler family. As to quaternary structure, interacts with APLNR.

Its subcellular location is the secreted. The protein localises to the extracellular space. Functionally, peptide hormone that functions as endogenous ligand for the G-protein-coupled apelin receptor (APLNR/APJ), that plays a role in the regulation of normal cardiovascular function and fluid homeostasis. Functions as a balanced agonist activating both G(i) protein pathway and beta-arrestin pathway of APLNR. Downstream G proteins activation, apelin can inhibit cAMP production and activate key intracellular effectors such as ERKs. On the other hand, APLNR activation induces beta-arrestin recruitment to the membrane leading to desensitization and internalization of the receptor. Required for mesendodermal differentiation, blood vessels formation and heart morphogenesis during early development and for adult cardiovascular homeostasis. Acts as a motogen by promoting mesendodermal cell migration during gastrulation by binding and activating APLNR. Acts as an early embryonic regulator of cellular movement with a role in migration and development of cardiac progenitor cells. May act as a chemoattractant for the activation of angioblast migration toward the embryonic midline, i.e. the position of the future vessel formation, during vasculogenesis. Positively regulates sinus venosus (SV)-derived endothelial cells migration into the developing heart to promote coronary blood vessel sprouting. Plays a role in placental vascular development; promotes placental trophoblast invasion and spiral artery remodeling in the uterus. Involved in the regulation of maternal cardiovascular homeostasis to prevent gestational hypertension and for potent cardioprotective functions during heart failure. Mediates myocardial contractility in an ERK1/2-dependent manner. The chain is Apelin receptor early endogenous ligand from Rattus norvegicus (Rat).